The primary structure comprises 484 residues: UDP-N-acetylmuramate--L-alanine ligase (484 aa).

122-128 (GTHGKTT) serves as a coordination point for ATP.

This sequence belongs to the MurCDEF family.

Its subcellular location is the cytoplasm. The catalysed reaction is UDP-N-acetyl-alpha-D-muramate + L-alanine + ATP = UDP-N-acetyl-alpha-D-muramoyl-L-alanine + ADP + phosphate + H(+). It functions in the pathway cell wall biogenesis; peptidoglycan biosynthesis. Its function is as follows. Cell wall formation. The sequence is that of UDP-N-acetylmuramate--L-alanine ligase from Mycobacterium sp. (strain JLS).